The sequence spans 436 residues: tRNA-2-methylthio-N(6)-dimethylallyladenosine synthase (436 aa).

Positions 5–121 (RKLFIKTYGC…LPDMLERTEG (117 aa)) constitute an MTTase N-terminal domain. 6 residues coordinate [4Fe-4S] cluster: Cys14, Cys50, Cys84, Cys158, Cys162, and Cys165. Residues 144 to 373 (ALRGPTAFLT…LGEQQRAAQA (230 aa)) form the Radical SAM core domain. The TRAM domain occupies 373–435 (AAMVGRELGV…PNSLAGERIG (63 aa)).

Belongs to the methylthiotransferase family. MiaB subfamily. Monomer. The cofactor is [4Fe-4S] cluster.

Its subcellular location is the cytoplasm. It carries out the reaction N(6)-dimethylallyladenosine(37) in tRNA + (sulfur carrier)-SH + AH2 + 2 S-adenosyl-L-methionine = 2-methylsulfanyl-N(6)-dimethylallyladenosine(37) in tRNA + (sulfur carrier)-H + 5'-deoxyadenosine + L-methionine + A + S-adenosyl-L-homocysteine + 2 H(+). Functionally, catalyzes the methylthiolation of N6-(dimethylallyl)adenosine (i(6)A), leading to the formation of 2-methylthio-N6-(dimethylallyl)adenosine (ms(2)i(6)A) at position 37 in tRNAs that read codons beginning with uridine. This chain is tRNA-2-methylthio-N(6)-dimethylallyladenosine synthase, found in Cereibacter sphaeroides (strain ATCC 17025 / ATH 2.4.3) (Rhodobacter sphaeroides).